Here is a 554-residue protein sequence, read N- to C-terminus: MAYYRTPHDVTALPAWQALNDHRKAMQDFSMREAFNADPQRFTQFTLSSCGLFLDYSKNLINAQTRDLLVGLANEVDLKGAIKSLFEGEIVNASENRPALHTALRRPVGDKLLVNGVNVMPDVHKVLNQITDLVGRIHDGLWRGYTEKPITDVVNIGIGGSFLGPELVSEALLSYAQKGVRCHYLANIDGSEFHELTMKLRAETTLFIVSSKSFNTLETLKNAQAARAWYLAQGGSEAELYRHFIAVSSNNAAAVAFGIREENIFPMWDWVGGRYSLWSAIGLPIALAIGMSNFKELLSGAYSMDQHFQSAPFEQNMPVLLALLGVWYGNFWGAQSHAILPYDHYLRNITKHLQQLDMESNGKSVRQDGTPVSTDTGPVIWGGVGCNGQHAYHQLLHQGTQLIPADFIVPIVSFNPVSDHHQWLYANCLSQSQALMLGKTRAEAEXELRDKGASEEEVQKLASHKVIPGNRPSNTLVVERISPRRLGALVALYEHKVFVQSVVWGINAFDQWGVELGKELGKGVYNRLVGSEESLAEDASTQGLINYFRGRHRG.

Glutamate 359 functions as the Proton donor in the catalytic mechanism. Residues histidine 390 and lysine 518 contribute to the active site.

Belongs to the GPI family.

The protein localises to the cytoplasm. It carries out the reaction alpha-D-glucose 6-phosphate = beta-D-fructose 6-phosphate. It participates in carbohydrate biosynthesis; gluconeogenesis. The protein operates within carbohydrate degradation; glycolysis; D-glyceraldehyde 3-phosphate and glycerone phosphate from D-glucose: step 2/4. Functionally, catalyzes the reversible isomerization of glucose-6-phosphate to fructose-6-phosphate. The chain is Glucose-6-phosphate isomerase from Pseudomonas fluorescens.